Consider the following 2925-residue polypeptide: TPR and ankyrin repeat-containing protein 1 (2925 aa).

2 TPR repeats span residues 15–48 (AVLL…DPTY) and 50–82 (KGYY…VQRS). ANK repeat units lie at residues 168-198 (EKYV…SVET), 203-232 (PLHA…EWKG), 240-276 (DGCT…DPTL), 463-492 (SQER…DPRA), 497-518 (EGDT…DIGF), and 546-575 (NGNT…KFDI). Disordered regions lie at residues 612-669 (SRQD…LPGT), 706-741 (PEDC…DCSE), and 1077-1103 (VEPG…SIEV). Residues 624–641 (SKSTAPGHTSQLKSQGSF) are compositionally biased toward polar residues. Residues 720–730 (AGKEGKKDDKP) are compositionally biased toward basic and acidic residues. A compositionally biased stretch (acidic residues) spans 1085–1103 (GGEEEEEEEDEEEEDSIEV). TPR repeat units follow at residues 1699 to 1732 (PAEW…EKEK) and 1793 to 1826 (LGKI…DLAL). Positions 2301 to 2330 (EEFEKLLHQEEDNYNRELKALESEKDERGR) form a coiled coil.

In Homo sapiens (Human), this protein is TPR and ankyrin repeat-containing protein 1 (TRANK1).